The primary structure comprises 913 residues: Protein ECT2 (913 aa).

At A2 the chain carries N-acetylalanine. 2 consecutive BRCT domains span residues 176-260 (MLNL…AAVD) and 266-354 (FKVP…MYLY). Position 359 is a phosphothreonine; by PKC/PRKCI (T359). Phosphoserine occurs at positions 367 and 370. T373 bears the Phosphothreonine mark. Residue S376 is modified to Phosphoserine. 2 consecutive short sequence motifs (nuclear localization signal) follow at residues 378–382 (RKRRR) and 401–405 (PRKRP). Disordered stretches follow at residues 389–415 (QLSR…SIGS) and 427–450 (IHYG…PPKQ). Residue T444 is modified to Phosphothreonine; by CDK1. A DH domain is found at 452–641 (ARWQVAKELY…KEVMTHINED (190 aa)). Residue K611 forms a Glycyl lysine isopeptide (Lys-Gly) (interchain with G-Cter in SUMO2) linkage. Positions 675-794 (RVETVSLGEH…KMLCRHVANT (120 aa)) constitute a PH domain. Phosphoserine occurs at positions 716 and 842. T846 is modified (phosphothreonine; by CDK1). The tract at residues 853 to 874 (MALSSSHSSEGRSPPSSGKLAV) is disordered. Over residues 856–870 (SSSHSSEGRSPPSSG) the composition is skewed to low complexity. S861 and S865 each carry phosphoserine.

Homodimer. Homooligomer. Found in the centralspindlin complex. Interacts with NR1I3. Interacts (Thr-359 phosphorylated form) with PARD6A; the interaction is observed in cancer cells. Interacts (Thr-359 phosphorylated form) with PRKCI; the interaction is observed in cancer cells. Interacts with PKP4; the interaction is observed at the midbody. Interacts with RACGAP1; the interaction is direct, occurs in a microtubule-dependent manner, occurs at anaphase and during cytokinesis, is inhibited in metaphase by phosphorylation of ECT2 on Thr-373 and is stimulated in early anaphase by dephosphorylation of ECT2 probably on Thr-373 through CDK1 activity. Interacts with PLK1; the interaction is stimulated upon its phosphorylation on Thr-444. Interacts with RHOA; the interaction results in allosteric activation of ECT2. Interacts with KIF23, PARD3, PARD6B and PRKCQ. Interacts with NEDD9/HEF1. In terms of processing, phosphorylated by PLK1 in vitro. Hyperphosphorylated during the G2 phase of the cell cycle. Phosphorylation at Thr-373 occurs during the G2/M phase, relieves its auto-inhibition status and stimulates its GEF activity. Phosphorylation at Thr-444 in G2/M phase is required for subsequent binding with PLK1 and Rho exchange activation. Dephosphorylated at the time of cytokinesis. Phosphorylation at Thr-359 is required for its transformation activity in cancer cells. Highest expression in testis. Also detectable in brain, kidney, liver and spleen.

It is found in the nucleus. Its subcellular location is the cytoplasm. The protein resides in the cytoskeleton. It localises to the spindle. The protein localises to the cleavage furrow. It is found in the midbody. Its subcellular location is the cell junction. The protein resides in the tight junction. With respect to regulation, autoinhibited by the C-terminal PH domain which folds back and binds to the surface of the DH domain, blocking binding of RHOA to the catalytic center of the DH domain. The 2nd BRCT domain is also involved in inhibition, probably by helping to impede RHOA binding. Allosterically activated by binding of activated GTP-bound RHOA to the PH domain which stimulates the release of PH inhibition and promotes the binding of substrate RHOA to the catalytic center. Binding of phosphorylated RACGAP1 to the N-terminal BRCT domain-containing region also releases autoinhibition. Its function is as follows. Guanine nucleotide exchange factor (GEF) that catalyzes the exchange of GDP for GTP. Promotes guanine nucleotide exchange on the Rho family members of small GTPases, like RHOA, RHOC, RAC1 and CDC42. Required for signal transduction pathways involved in the regulation of cytokinesis. Component of the centralspindlin complex that serves as a microtubule-dependent and Rho-mediated signaling required for the myosin contractile ring formation during the cell cycle cytokinesis. Regulates the translocation of RHOA from the central spindle to the equatorial region. Plays a role in the control of mitotic spindle assembly; regulates the activation of CDC42 in metaphase for the process of spindle fibers attachment to kinetochores before chromosome congression. Involved in the regulation of epithelial cell polarity; participates in the formation of epithelial tight junctions in a polarity complex PARD3-PARD6-protein kinase PRKCQ-dependent manner. Plays a role in the regulation of neurite outgrowth. Inhibits phenobarbital (PB)-induced NR1I3 nuclear translocation. Stimulates the activity of RAC1 through its association with the oncogenic PARD6A-PRKCI complex in cancer cells, thereby acting to coordinately drive tumor cell proliferation and invasion. Also stimulates genotoxic stress-induced RHOB activity in breast cancer cells leading to their cell death. In Mus musculus (Mouse), this protein is Protein ECT2 (Ect2).